The following is a 123-amino-acid chain: Small ribosomal subunit protein uS12 (123 aa).

A 3-methylthioaspartic acid modification is found at Asp-89. Residues 100–123 are disordered; that stretch reads GSLDTSGVKGRNQGRSKYGTKRPK. The segment covering 111 to 123 has biased composition (basic residues); that stretch reads NQGRSKYGTKRPK.

It belongs to the universal ribosomal protein uS12 family. Part of the 30S ribosomal subunit. Contacts proteins S8 and S17. May interact with IF1 in the 30S initiation complex.

With S4 and S5 plays an important role in translational accuracy. Functionally, interacts with and stabilizes bases of the 16S rRNA that are involved in tRNA selection in the A site and with the mRNA backbone. Located at the interface of the 30S and 50S subunits, it traverses the body of the 30S subunit contacting proteins on the other side and probably holding the rRNA structure together. The combined cluster of proteins S8, S12 and S17 appears to hold together the shoulder and platform of the 30S subunit. The polypeptide is Small ribosomal subunit protein uS12 (Pseudomonas fluorescens (strain ATCC BAA-477 / NRRL B-23932 / Pf-5)).